Consider the following 547-residue polypeptide: Chaperonin GroEL (547 aa).

Residues 30-33, K51, 87-91, G415, and D495 each bind ATP; these read TLGP and DGTTT.

Belongs to the chaperonin (HSP60) family. Forms a cylinder of 14 subunits composed of two heptameric rings stacked back-to-back. Interacts with the co-chaperonin GroES.

It is found in the cytoplasm. The catalysed reaction is ATP + H2O + a folded polypeptide = ADP + phosphate + an unfolded polypeptide.. Together with its co-chaperonin GroES, plays an essential role in assisting protein folding. The GroEL-GroES system forms a nano-cage that allows encapsulation of the non-native substrate proteins and provides a physical environment optimized to promote and accelerate protein folding. The polypeptide is Chaperonin GroEL (Rhizobium leguminosarum bv. trifolii (strain WSM2304)).